A 74-amino-acid polypeptide reads, in one-letter code: UPF0057 membrane protein At4g30660 (74 aa).

2 consecutive transmembrane segments (helical) span residues 4 to 24 (NCEI…GVCF) and 37 to 57 (LVLT…VIVF).

The protein belongs to the UPF0057 (PMP3) family.

It is found in the membrane. In Arabidopsis thaliana (Mouse-ear cress), this protein is UPF0057 membrane protein At4g30660.